The following is a 660-amino-acid chain: MTLNLRCKVVEPSWKVLQHYASYVRNTAAVSLVRHHARLSTSTNLTSKAAEPITALSEFPVEKIRNFSIIAHIDHGKSTLADRLLEIAGVIPKSAENKQVLDKLQVERERGITVKAQTASMLYEYHGETYLLNLIDTPGHVDFNYEVSRSLAACQGVLLVVDASQGVQAQTVANFFLAFEADLKIIPVLNKIDMKSANPDRIANQLQRVFDIEPEETMKVSAKDGTGIDQLLPTIIEKIPPPTCDQQKPLKALLFDSWYDRYRGVIGLLAIKDGKLTKGEKIQSAFSKKQYEILDLGILYPNEKSTKTLGSGQVGFIVAGMKSTKEAQIGDTFCHVNCPVDALPGFKPAKSMVYAGLFPFNKSEFEVLRSAIHKLTLNDSSVSVHNDNSAALGPGFRLGFLGLLHMDVFNQRLEQEYDVSVVITSPNVPFKGKYRYASILRKEHEEMVITTPSQFPDIAQVVEYLEPVVMGTIIFPDKYMGKMLNLCQSKRGQQVNISYIDETRVMLKYILPLHEIVIDFYDQLKSLTSGYASFDYEDHGYRSATLAKMEILLNGTPVDALTTVVHEEKARITGKQVCQKLKEAIPRQLYEVAIQATIRGKVVARETIRAVRKDVTAKCYGGDITRKLKLLKRQKEGKSRLKMIGKIEVPKEAFLAVLKR.

The tr-type G domain occupies 62-243 (EKIRNFSIIA…TIIEKIPPPT (182 aa)). GTP is bound by residues 71–78 (AHIDHGKS), 136–140 (DTPGH), and 190–193 (NKID).

The protein belongs to the TRAFAC class translation factor GTPase superfamily. Classic translation factor GTPase family. LepA subfamily.

Its subcellular location is the mitochondrion inner membrane. The enzyme catalyses GTP + H2O = GDP + phosphate + H(+). Promotes mitochondrial protein synthesis. May act as a fidelity factor of the translation reaction, by catalyzing a one-codon backward translocation of tRNAs on improperly translocated ribosomes. Binds to mitochondrial ribosomes in a GTP-dependent manner. This chain is Translation factor GUF1 homolog, mitochondrial, found in Trichoplax adhaerens (Trichoplax reptans).